Here is a 70-residue protein sequence, read N- to C-terminus: Conotoxin TsMLKM-011 (70 aa).

The N-terminal stretch at 1–24 (MLKMGVVLFVFLVLFPLATLQLDA) is a signal peptide. Residues 25-54 (DQPVERYAENKQLVSPYERRQIILHALGQR) constitute a propeptide that is removed on maturation. 3 disulfides stabilise this stretch: Cys-56-Cys-66, Cys-57-Cys-68, and Cys-62-Cys-69.

It belongs to the conotoxin M superfamily. Expressed by the venom duct.

Its subcellular location is the secreted. This chain is Conotoxin TsMLKM-011, found in Conus tessulatus (Tessellate cone).